The chain runs to 307 residues: Coproporphyrin III ferrochelatase (307 aa).

Residues Tyr-12, Arg-29, 45-46, Ser-53, and Tyr-124 each bind Fe-coproporphyrin III; that span reads RY. Fe(2+) contacts are provided by His-181 and Glu-263.

This sequence belongs to the ferrochelatase family.

It localises to the cytoplasm. The catalysed reaction is Fe-coproporphyrin III + 2 H(+) = coproporphyrin III + Fe(2+). It participates in porphyrin-containing compound metabolism; protoheme biosynthesis. Its function is as follows. Involved in coproporphyrin-dependent heme b biosynthesis. Catalyzes the insertion of ferrous iron into coproporphyrin III to form Fe-coproporphyrin III. The chain is Coproporphyrin III ferrochelatase from Staphylococcus epidermidis (strain ATCC 35984 / DSM 28319 / BCRC 17069 / CCUG 31568 / BM 3577 / RP62A).